The chain runs to 271 residues: Mannosyl-3-phosphoglycerate phosphatase (271 aa).

Asp13 serves as the catalytic Nucleophile. Residues Asp13, Asp15, and Asp214 each coordinate Mg(2+).

The protein belongs to the HAD-like hydrolase superfamily. MPGP family. Mg(2+) is required as a cofactor.

The protein localises to the cytoplasm. The enzyme catalyses 2-O-(alpha-D-mannosyl)-3-phosphoglycerate + H2O = (2R)-2-O-(alpha-D-mannosyl)-glycerate + phosphate. This Escherichia coli O7:K1 (strain IAI39 / ExPEC) protein is Mannosyl-3-phosphoglycerate phosphatase.